Here is a 419-residue protein sequence, read N- to C-terminus: Napsin-A (419 aa).

The signal sequence occupies residues 1–16 (MSPLLLLLLCLLLGNL). In terms of domain architecture, Peptidase A1 spans 73–394 (YFGTIGLGTP…KNVGPRVGLA (322 aa)). Residue N85 is glycosylated (N-linked (GlcNAc...) asparagine). D91 is an active-site residue. C104 and C111 are disulfide-bonded. N-linked (GlcNAc...) asparagine glycans are attached at residues N128 and N149. C269 and C273 are oxidised to a cystine. D278 is an active-site residue. Cysteines 312 and 349 form a disulfide. N331 is a glycosylation site (N-linked (GlcNAc...) asparagine). Residues 391-419 (VGLARAQSRSTDRAERRTTQAQFFKRRPG) form a disordered region.

It belongs to the peptidase A1 family. As to expression, expressed at the highest levels in the kidney, at a moderate level in the lung, and at low levels in the spleen and adipose tissue.

The protein localises to the secreted. May be involved in processing of pneumocyte surfactant precursors. This chain is Napsin-A (Napsa), found in Mus musculus (Mouse).